A 616-amino-acid polypeptide reads, in one-letter code: Leucine aminopeptidase (616 aa).

Substrate-binding positions include 128 to 130 (QCQ) and 282 to 286 (GGMEN). Residue histidine 309 coordinates Zn(2+). Glutamate 310 acts as the Proton acceptor in catalysis. Positions 313 and 332 each coordinate Zn(2+). Tyrosine 397 serves as the catalytic Proton donor. 566-568 (RMK) contributes to the substrate binding site.

The protein belongs to the peptidase M1 family. Zn(2+) is required as a cofactor.

The protein localises to the cytoplasm. The catalysed reaction is an epoxide + H2O = an ethanediol. Functionally, aminopeptidase that preferentially cleaves di- and tripeptides. Also has low epoxide hydrolase activity (in vitro). Can hydrolyze the epoxide leukotriene LTA(4) but it forms preferentially 5,6-dihydroxy-7,9,11,14-eicosatetraenoic acid rather than the cytokine leukotriene B(4) as the product compared to the homologous mammalian enzyme (in vitro). The sequence is that of Leucine aminopeptidase (LKHA4) from Arabidopsis thaliana (Mouse-ear cress).